The following is a 213-amino-acid chain: Glycerol-3-phosphate acyltransferase (213 aa).

The next 6 helical transmembrane spans lie at 3-23 (ILLL…LWIG), 54-76 (TITF…WLGI), 83-100 (IIGF…FTGF), 110-130 (AGVL…VFAL), 142-162 (SITA…IHFL), and 163-183 (LDGY…VIIF).

This sequence belongs to the PlsY family. In terms of assembly, probably interacts with PlsX.

The protein resides in the cell membrane. It catalyses the reaction an acyl phosphate + sn-glycerol 3-phosphate = a 1-acyl-sn-glycero-3-phosphate + phosphate. The protein operates within lipid metabolism; phospholipid metabolism. Catalyzes the transfer of an acyl group from acyl-phosphate (acyl-PO(4)) to glycerol-3-phosphate (G3P) to form lysophosphatidic acid (LPA). This enzyme utilizes acyl-phosphate as fatty acyl donor, but not acyl-CoA or acyl-ACP. This is Glycerol-3-phosphate acyltransferase from Streptococcus thermophilus (strain ATCC BAA-491 / LMD-9).